The sequence spans 234 residues: MAKLTKRMRVIRDKVDATKQYDINEAITLLKELATAKFVESVDVAVNLGIDARKSDQNVRGATVLPHGTGRSVRVAVFTQGPNAEAAKAAGAELVGMEDLAEQIKKGEMNFDVVIASPDAMRVVGQLGQVLGPRGLMPNPKVGTVTPNVAEAVKNAKAGQVRYRNDKNGIIHTTIGKVDFDADKLKENLEALLVALKKAKPSSAKGVYIKKVSLSTTMGAGVAVDQSGLSAAAN.

It belongs to the universal ribosomal protein uL1 family. Part of the 50S ribosomal subunit.

Functionally, binds directly to 23S rRNA. The L1 stalk is quite mobile in the ribosome, and is involved in E site tRNA release. In terms of biological role, protein L1 is also a translational repressor protein, it controls the translation of the L11 operon by binding to its mRNA. The sequence is that of Large ribosomal subunit protein uL1 from Cronobacter sakazakii (strain ATCC BAA-894) (Enterobacter sakazakii).